We begin with the raw amino-acid sequence, 90 residues long: Translation initiation factor IF-1 (90 aa).

In terms of domain architecture, S1-like spans 7–76; it reads KEDVIRMEGT…TRGRIVYRKK (70 aa).

The protein belongs to the IF-1 family. Component of the 30S ribosomal translation pre-initiation complex which assembles on the 30S ribosome in the order IF-2 and IF-3, IF-1 and N-formylmethionyl-tRNA(fMet); mRNA recruitment can occur at any time during PIC assembly.

Its subcellular location is the cytoplasm. In terms of biological role, one of the essential components for the initiation of protein synthesis. Stabilizes the binding of IF-2 and IF-3 on the 30S subunit to which N-formylmethionyl-tRNA(fMet) subsequently binds. Helps modulate mRNA selection, yielding the 30S pre-initiation complex (PIC). Upon addition of the 50S ribosomal subunit IF-1, IF-2 and IF-3 are released leaving the mature 70S translation initiation complex. The protein is Translation initiation factor IF-1 of Fervidobacterium nodosum (strain ATCC 35602 / DSM 5306 / Rt17-B1).